Reading from the N-terminus, the 183-residue chain is Inosine/xanthosine triphosphatase (183 aa).

Asp75 serves as a coordination point for Mg(2+). 75 to 76 contacts substrate; that stretch reads DG.

Belongs to the YjjX NTPase family. In terms of assembly, homodimer. Mg(2+) serves as cofactor. It depends on Mn(2+) as a cofactor.

It catalyses the reaction XTP + H2O = XDP + phosphate + H(+). The enzyme catalyses ITP + H2O = IDP + phosphate + H(+). Its function is as follows. Phosphatase that hydrolyzes non-canonical purine nucleotides such as XTP and ITP to their respective diphosphate derivatives. Probably excludes non-canonical purines from DNA/RNA precursor pool, thus preventing their incorporation into DNA/RNA and avoiding chromosomal lesions. The protein is Inosine/xanthosine triphosphatase of Vibrio vulnificus (strain CMCP6).